The primary structure comprises 49 residues: Large ribosomal subunit protein bL33A (49 aa).

The tract at residues 20–49 is disordered; the sequence is KKNKRNNPDRVEFKKYCPRDKKSTLHRETK. Residues 25-49 show a composition bias toward basic and acidic residues; that stretch reads NNPDRVEFKKYCPRDKKSTLHRETK.

It belongs to the bacterial ribosomal protein bL33 family. As to quaternary structure, part of the 50S ribosomal subunit. Interacts with VmlR.

The polypeptide is Large ribosomal subunit protein bL33A (rpmGA) (Bacillus subtilis (strain 168)).